Consider the following 335-residue polypeptide: DNA-directed RNA polymerase subunit alpha (335 aa).

Positions 1 to 231 are alpha N-terminal domain (alpha-NTD); it reads MVREKVTVST…DLFIPFLHME (231 aa). The tract at residues 262–335 is alpha C-terminal domain (alpha-CTD); that stretch reads KKKLSLESIF…FALDLPKNLN (74 aa).

It belongs to the RNA polymerase alpha chain family. As to quaternary structure, in plastids the minimal PEP RNA polymerase catalytic core is composed of four subunits: alpha, beta, beta', and beta''. When a (nuclear-encoded) sigma factor is associated with the core the holoenzyme is formed, which can initiate transcription.

The protein localises to the plastid. The catalysed reaction is RNA(n) + a ribonucleoside 5'-triphosphate = RNA(n+1) + diphosphate. Its function is as follows. DNA-dependent RNA polymerase catalyzes the transcription of DNA into RNA using the four ribonucleoside triphosphates as substrates. This is DNA-directed RNA polymerase subunit alpha from Cuscuta reflexa (Southern Asian dodder).